Reading from the N-terminus, the 520-residue chain is Probable protein phosphatase 2C 39 (520 aa).

A PPM-type phosphatase domain is found at 160-507; that stretch reads FLTSTEIKMA…DDVTIIVIIL (348 aa). Positions 195, 196, 435, and 498 each coordinate Mn(2+).

This sequence belongs to the PP2C family. It depends on Mg(2+) as a cofactor. Requires Mn(2+) as cofactor.

The enzyme catalyses O-phospho-L-seryl-[protein] + H2O = L-seryl-[protein] + phosphate. It catalyses the reaction O-phospho-L-threonyl-[protein] + H2O = L-threonyl-[protein] + phosphate. The chain is Probable protein phosphatase 2C 39 from Oryza sativa subsp. japonica (Rice).